A 355-amino-acid polypeptide reads, in one-letter code: Methylthioribose-1-phosphate isomerase (355 aa).

Substrate-binding positions include 52–54 (RGA), Arg-95, and Gln-204. Residue Asp-245 is the Proton donor of the active site. A substrate-binding site is contributed by 255-256 (NK).

This sequence belongs to the eIF-2B alpha/beta/delta subunits family. MtnA subfamily.

It carries out the reaction 5-(methylsulfanyl)-alpha-D-ribose 1-phosphate = 5-(methylsulfanyl)-D-ribulose 1-phosphate. It functions in the pathway amino-acid biosynthesis; L-methionine biosynthesis via salvage pathway; L-methionine from S-methyl-5-thio-alpha-D-ribose 1-phosphate: step 1/6. Its function is as follows. Catalyzes the interconversion of methylthioribose-1-phosphate (MTR-1-P) into methylthioribulose-1-phosphate (MTRu-1-P). This chain is Methylthioribose-1-phosphate isomerase, found in Acaryochloris marina (strain MBIC 11017).